Consider the following 363-residue polypeptide: Actin-related protein 7 (363 aa).

N-acetylmethionine is present on methionine 1.

Belongs to the actin family. Plant ARP7 subfamily. Mostly expressed in flowers, and, to a lower extent, in roots, seedlings, leaves and siliques (at protein level).

The protein resides in the nucleus. The protein localises to the cytoplasm. In terms of biological role, essential protein required during embryogenesis and all plant development stages, probably through a chromatin-mediated regulation of gene expression. This Arabidopsis thaliana (Mouse-ear cress) protein is Actin-related protein 7 (ARP7).